The sequence spans 422 residues: L-threonine dehydratase biosynthetic IlvA (422 aa).

K56 is modified (N6-(pyridoxal phosphate)lysine). Residues N83, G189 to L193, and S315 contribute to the pyridoxal 5'-phosphate site. The ACT-like domain maps to H339 to E413.

Belongs to the serine/threonine dehydratase family. Homotetramer. The cofactor is pyridoxal 5'-phosphate.

The catalysed reaction is L-threonine = 2-oxobutanoate + NH4(+). It participates in amino-acid biosynthesis; L-isoleucine biosynthesis; 2-oxobutanoate from L-threonine: step 1/1. Catalyzes the anaerobic formation of alpha-ketobutyrate and ammonia from threonine in a two-step reaction. The first step involved a dehydration of threonine and a production of enamine intermediates (aminocrotonate), which tautomerizes to its imine form (iminobutyrate). Both intermediates are unstable and short-lived. The second step is the nonenzymatic hydrolysis of the enamine/imine intermediates to form 2-ketobutyrate and free ammonia. In the low water environment of the cell, the second step is accelerated by RidA. The sequence is that of L-threonine dehydratase biosynthetic IlvA (ilvA) from Staphylococcus aureus (strain NCTC 8325 / PS 47).